Consider the following 430-residue polypeptide: Bifunctional protein GlmU (430 aa).

Residues 1-227 are pyrophosphorylase; sequence MISKTHTFVI…GEEATGINNR (227 aa). Residues K25, Q74, 79 to 80, 104 to 106, G140, E154, N168, and N225 contribute to the UDP-N-acetyl-alpha-D-glucosamine site; these read GT and YGD. D106 provides a ligand contact to Mg(2+). Residue N225 coordinates Mg(2+). Positions 228–248 are linker; that stretch reads NDLIKAEFYFQENKRKIFTDS. The tract at residues 249-430 is N-acetyltransferase; sequence GVTLVAPETV…REKQVTKRIK (182 aa). UDP-N-acetyl-alpha-D-glucosamine is bound by residues R314 and K332. Catalysis depends on H344, which acts as the Proton acceptor. The UDP-N-acetyl-alpha-D-glucosamine site is built by Y347 and N358. Acetyl-CoA-binding positions include A361, 367 to 368, A404, and R421; that span reads NY.

In the N-terminal section; belongs to the N-acetylglucosamine-1-phosphate uridyltransferase family. It in the C-terminal section; belongs to the transferase hexapeptide repeat family. As to quaternary structure, homotrimer. Mg(2+) is required as a cofactor.

It is found in the cytoplasm. The enzyme catalyses alpha-D-glucosamine 1-phosphate + acetyl-CoA = N-acetyl-alpha-D-glucosamine 1-phosphate + CoA + H(+). The catalysed reaction is N-acetyl-alpha-D-glucosamine 1-phosphate + UTP + H(+) = UDP-N-acetyl-alpha-D-glucosamine + diphosphate. It functions in the pathway nucleotide-sugar biosynthesis; UDP-N-acetyl-alpha-D-glucosamine biosynthesis; N-acetyl-alpha-D-glucosamine 1-phosphate from alpha-D-glucosamine 6-phosphate (route II): step 2/2. The protein operates within nucleotide-sugar biosynthesis; UDP-N-acetyl-alpha-D-glucosamine biosynthesis; UDP-N-acetyl-alpha-D-glucosamine from N-acetyl-alpha-D-glucosamine 1-phosphate: step 1/1. Its pathway is bacterial outer membrane biogenesis; LPS lipid A biosynthesis. Functionally, catalyzes the last two sequential reactions in the de novo biosynthetic pathway for UDP-N-acetylglucosamine (UDP-GlcNAc). The C-terminal domain catalyzes the transfer of acetyl group from acetyl coenzyme A to glucosamine-1-phosphate (GlcN-1-P) to produce N-acetylglucosamine-1-phosphate (GlcNAc-1-P), which is converted into UDP-GlcNAc by the transfer of uridine 5-monophosphate (from uridine 5-triphosphate), a reaction catalyzed by the N-terminal domain. This chain is Bifunctional protein GlmU, found in Wolbachia pipientis wMel.